The sequence spans 209 residues: Uracil phosphoribosyltransferase (209 aa).

Residues arginine 79, arginine 104, and 131–139 contribute to the 5-phospho-alpha-D-ribose 1-diphosphate site; that span reads DPMLATGGT. Uracil contacts are provided by residues isoleucine 194 and 199-201; that span reads GDA. Aspartate 200 lines the 5-phospho-alpha-D-ribose 1-diphosphate pocket.

It belongs to the UPRTase family. The cofactor is Mg(2+).

It carries out the reaction UMP + diphosphate = 5-phospho-alpha-D-ribose 1-diphosphate + uracil. It functions in the pathway pyrimidine metabolism; UMP biosynthesis via salvage pathway; UMP from uracil: step 1/1. With respect to regulation, allosterically activated by GTP. Functionally, catalyzes the conversion of uracil and 5-phospho-alpha-D-ribose 1-diphosphate (PRPP) to UMP and diphosphate. The polypeptide is Uracil phosphoribosyltransferase (Pseudoalteromonas atlantica (strain T6c / ATCC BAA-1087)).